The primary structure comprises 254 residues: 5-oxoprolinase subunit A (254 aa).

The protein belongs to the LamB/PxpA family. As to quaternary structure, forms a complex composed of PxpA, PxpB and PxpC.

It catalyses the reaction 5-oxo-L-proline + ATP + 2 H2O = L-glutamate + ADP + phosphate + H(+). Its function is as follows. Catalyzes the cleavage of 5-oxoproline to form L-glutamate coupled to the hydrolysis of ATP to ADP and inorganic phosphate. The polypeptide is 5-oxoprolinase subunit A (Rhodopseudomonas palustris (strain ATCC BAA-98 / CGA009)).